The primary structure comprises 214 residues: Probable transaldolase (214 aa).

The Schiff-base intermediate with substrate role is filled by lysine 83.

The protein belongs to the transaldolase family. Type 3B subfamily.

The protein localises to the cytoplasm. The catalysed reaction is D-sedoheptulose 7-phosphate + D-glyceraldehyde 3-phosphate = D-erythrose 4-phosphate + beta-D-fructose 6-phosphate. It functions in the pathway carbohydrate degradation; pentose phosphate pathway; D-glyceraldehyde 3-phosphate and beta-D-fructose 6-phosphate from D-ribose 5-phosphate and D-xylulose 5-phosphate (non-oxidative stage): step 2/3. Functionally, transaldolase is important for the balance of metabolites in the pentose-phosphate pathway. This Geobacter metallireducens (strain ATCC 53774 / DSM 7210 / GS-15) protein is Probable transaldolase.